The primary structure comprises 278 residues: Putative phosphoenolpyruvate synthase regulatory protein (278 aa).

157-164 (GVSRSGKT) provides a ligand contact to ADP.

Belongs to the pyruvate, phosphate/water dikinase regulatory protein family. PSRP subfamily.

The catalysed reaction is [pyruvate, water dikinase] + ADP = [pyruvate, water dikinase]-phosphate + AMP + H(+). The enzyme catalyses [pyruvate, water dikinase]-phosphate + phosphate + H(+) = [pyruvate, water dikinase] + diphosphate. Bifunctional serine/threonine kinase and phosphorylase involved in the regulation of the phosphoenolpyruvate synthase (PEPS) by catalyzing its phosphorylation/dephosphorylation. This chain is Putative phosphoenolpyruvate synthase regulatory protein, found in Vibrio parahaemolyticus serotype O3:K6 (strain RIMD 2210633).